The following is a 234-amino-acid chain: Ubiquinone biosynthesis O-methyltransferase (234 aa).

Residues Arg36, Gly56, Asp77, and Met125 each coordinate S-adenosyl-L-methionine.

The protein belongs to the methyltransferase superfamily. UbiG/COQ3 family.

The enzyme catalyses a 3-demethylubiquinol + S-adenosyl-L-methionine = a ubiquinol + S-adenosyl-L-homocysteine + H(+). It catalyses the reaction a 3-(all-trans-polyprenyl)benzene-1,2-diol + S-adenosyl-L-methionine = a 2-methoxy-6-(all-trans-polyprenyl)phenol + S-adenosyl-L-homocysteine + H(+). Its pathway is cofactor biosynthesis; ubiquinone biosynthesis. Its function is as follows. O-methyltransferase that catalyzes the 2 O-methylation steps in the ubiquinone biosynthetic pathway. The sequence is that of Ubiquinone biosynthesis O-methyltransferase from Actinobacillus pleuropneumoniae serotype 5b (strain L20).